A 235-amino-acid chain; its full sequence is Probable tetraspanin tspA (235 aa).

Over 1 to 18 (MVDTSNLLPQTPRLLKVP) the chain is Cytoplasmic. Residues 19 to 39 (LIILNIILWILGLVLVIVGGI) traverse the membrane as a helical segment. Topologically, residues 40 to 68 (CVSFLSNFKDFTKASDAKSALSNLTTSIP) are extracellular. The N-linked (GlcNAc...) asparagine glycan is linked to Asn62. Residues 69–89 (AGVLVIGILFVIFTVVGCFVA) traverse the membrane as a helical segment. At 90 to 93 (YKEK) the chain is on the cytoplasmic side. A helical transmembrane segment spans residues 94 to 114 (LVGLVIYCAVMLILLVILIGV). The Extracellular segment spans residues 115–200 (GGKAITLHND…FSSKIYAVGA (86 aa)). 3 N-linked (GlcNAc...) asparagine glycosylation sites follow: Asn139, Asn143, and Asn160. The chain crosses the membrane as a helical span at residues 201 to 221 (AGLAIGIIELVAILFSLFLII). Residues 222–235 (RICRSPRTRSYDQY) lie on the Cytoplasmic side of the membrane.

This sequence belongs to the tetraspanin (TM4SF) family.

Its subcellular location is the membrane. This is Probable tetraspanin tspA (tspA) from Dictyostelium discoideum (Social amoeba).